Reading from the N-terminus, the 281-residue chain is 2,3,4,5-tetrahydropyridine-2,6-dicarboxylate N-succinyltransferase (281 aa).

2 residues coordinate substrate: R108 and D145.

It belongs to the transferase hexapeptide repeat family. As to quaternary structure, homotrimer.

It localises to the cytoplasm. It catalyses the reaction (S)-2,3,4,5-tetrahydrodipicolinate + succinyl-CoA + H2O = (S)-2-succinylamino-6-oxoheptanedioate + CoA. It participates in amino-acid biosynthesis; L-lysine biosynthesis via DAP pathway; LL-2,6-diaminopimelate from (S)-tetrahydrodipicolinate (succinylase route): step 1/3. This chain is 2,3,4,5-tetrahydropyridine-2,6-dicarboxylate N-succinyltransferase, found in Rhodopseudomonas palustris (strain ATCC BAA-98 / CGA009).